We begin with the raw amino-acid sequence, 569 residues long: Urease subunit alpha (569 aa).

A Urease domain is found at 131-569 (GGFDSHIHFI…LPMAQRYFLF (439 aa)). H136, H138, and K219 together coordinate Ni(2+). The residue at position 219 (K219) is an N6-carboxylysine. A substrate-binding site is contributed by H221. Residues H248 and H274 each contribute to the Ni(2+) site. H322 (proton donor) is an active-site residue. Ni(2+) is bound at residue D362.

Belongs to the metallo-dependent hydrolases superfamily. Urease alpha subunit family. As to quaternary structure, heterotrimer of UreA (gamma), UreB (beta) and UreC (alpha) subunits. Three heterotrimers associate to form the active enzyme. Requires Ni cation as cofactor. In terms of processing, carboxylation allows a single lysine to coordinate two nickel ions.

It localises to the cytoplasm. The catalysed reaction is urea + 2 H2O + H(+) = hydrogencarbonate + 2 NH4(+). Its pathway is nitrogen metabolism; urea degradation; CO(2) and NH(3) from urea (urease route): step 1/1. This chain is Urease subunit alpha, found in Ruegeria pomeroyi (strain ATCC 700808 / DSM 15171 / DSS-3) (Silicibacter pomeroyi).